A 169-amino-acid chain; its full sequence is Myosin regulatory light chain 2, skeletal muscle isoform A (169 aa).

Phosphoserine is present on Ser21. EF-hand domains lie at 26 to 61, 96 to 131, and 132 to 167; these read SQIQ…MGQL, DPED…QCDR, and FTAE…GEEK. Ca(2+)-binding residues include Asp39, Asn41, Asp43, and Asp50.

Myosin is a hexamer of 2 heavy chains and 4 light chains. Interacts with nanos3; the interaction negatively regulates mylpfa phosphorylation.

Functionally, myosin regulatory subunit that plays a role to maintain muscle integrity during early development. Plays a role in muscle contraction. The chain is Myosin regulatory light chain 2, skeletal muscle isoform A (mylpfa) from Danio rerio (Zebrafish).